Consider the following 212-residue polypeptide: ECF RNA polymerase sigma factor SigD (212 aa).

The interval 49–119 (ETIRPIVVRY…VADAHRAAGR (71 aa)) is sigma-70 factor domain-2. Residues 75–78 (DVAQ) carry the Polymerase core binding motif. Residues 152–201 (NELLEILPAKQREILILRVVVGLSAEETAAAVGSTTGAVRVAQHRALQRL) are sigma-70 factor domain-4. The segment at residues 176-195 (AEETAAAVGSTTGAVRVAQH) is a DNA-binding region (H-T-H motif).

This sequence belongs to the sigma-70 factor family. ECF subfamily. In terms of assembly, interacts transiently with the RNA polymerase catalytic core formed by RpoA, RpoB, RpoC and RpoZ (2 alpha, 1 beta, 1 beta' and 1 omega subunit) to form the RNA polymerase holoenzyme that can initiate transcription. Interacts (via sigma-70 factor domain 4) with RsdA.

Functionally, sigma factors are initiation factors that promote the attachment of RNA polymerase to specific initiation sites and are then released. Extracytoplasmic function (ECF) sigma factors are held in an inactive form by an anti-sigma factor until released by regulated intramembrane proteolysis. The protein is ECF RNA polymerase sigma factor SigD (sigD) of Mycobacterium bovis (strain ATCC BAA-935 / AF2122/97).